Reading from the N-terminus, the 108-residue chain is Nascent polypeptide-associated complex protein (108 aa).

An NAC-A/B domain is found at 1–68; it reads MNPREIRRMM…LREVKKEVEQ (68 aa).

It belongs to the NAC-alpha family. In terms of assembly, homodimer. Interacts with the ribosome. Binds ribosomal RNA.

Its function is as follows. Contacts the emerging nascent chain on the ribosome. This Picrophilus torridus (strain ATCC 700027 / DSM 9790 / JCM 10055 / NBRC 100828 / KAW 2/3) protein is Nascent polypeptide-associated complex protein.